The sequence spans 1537 residues: Dicer-like protein 1 (1537 aa).

The disordered stretch occupies residues 38-68 (SDPAESSVDVQDEHSSDDSDNENEVFPKQND). The 182-residue stretch at 133–314 (LFERAKTQNT…EAATRLETFL (182 aa)) folds into the Helicase ATP-binding domain. 146 to 153 (LDTGSGKT) contributes to the ATP binding site. A DEAH box motif is present at residues 259–262 (DEAH). One can recognise a Helicase C-terminal domain in the interval 459–618 (ELSKHFNDTT…EILPEDRILH (160 aa)). One can recognise a Dicer dsRNA-binding fold domain in the interval 651-741 (AIAILARYAS…NSIYHRRLPA (91 aa)). A PAZ domain is found at 891–1019 (DTVSFVHNND…ICAEPLRISA (129 aa)). RNase III domains are found at residues 1043 to 1202 (IALE…LSGG) and 1253 to 1405 (ARHV…VDSK). Positions 1294, 1391, and 1394 each coordinate Mg(2+). The DRBM domain occupies 1439–1507 (TFLHNKLTNE…SEKALAVLDG (69 aa)). 4 residues coordinate Zn(2+): Cys-1451, His-1478, Cys-1519, and Cys-1521.

It belongs to the helicase family. Dicer subfamily. Requires Mg(2+) as cofactor. The cofactor is Mn(2+).

In terms of biological role, dicer-like endonuclease involved in cleaving double-stranded RNA in the RNA interference (RNAi) pathway. Produces 21 to 25 bp dsRNAs (siRNAs) which target the selective destruction of homologous RNAs leading to sequence-specific suppression of gene expression, called post-transcriptional gene silencing (PTGS). Part of a broad host defense response against viral infection and transposons. The sequence is that of Dicer-like protein 1 (dcl1) from Aspergillus fumigatus (strain ATCC MYA-4609 / CBS 101355 / FGSC A1100 / Af293) (Neosartorya fumigata).